A 118-amino-acid polypeptide reads, in one-letter code: Beta-2-microglobulin (118 aa).

An N-terminal signal peptide occupies residues 1–20; it reads MARVVALVLLGLLSLTGLEA. Residues 22–115 form the Ig-like C1-type domain; the sequence is PRVPKVQVYS…LKDPLIVKWD (94 aa). Cys45 and Cys99 are oxidised to a cystine.

It belongs to the beta-2-microglobulin family. Heterodimer of an alpha chain and a beta chain. Beta-2-microglobulin is the beta-chain of major histocompatibility complex class I molecules.

The protein localises to the secreted. In terms of biological role, component of the class I major histocompatibility complex (MHC). Involved in the presentation of peptide antigens to the immune system. The chain is Beta-2-microglobulin (B2M) from Equus caballus (Horse).